The chain runs to 273 residues: HMP-PP phosphatase (273 aa).

Catalysis depends on aspartate 8, which acts as the Nucleophile. Residues aspartate 8, aspartate 10, and aspartate 212 each contribute to the Mg(2+) site.

This sequence belongs to the HAD-like hydrolase superfamily. Cof family. The cofactor is Mg(2+).

It catalyses the reaction 4-amino-2-methyl-5-(diphosphooxymethyl)pyrimidine + H2O = 4-amino-2-methyl-5-(phosphooxymethyl)pyrimidine + phosphate + H(+). Its function is as follows. Catalyzes the hydrolysis of 4-amino-2-methyl-5-hydroxymethylpyrimidine pyrophosphate (HMP-PP) to 4-amino-2-methyl-5-hydroxymethylpyrimidine phosphate (HMP-P). This chain is HMP-PP phosphatase, found in Yersinia enterocolitica serotype O:8 / biotype 1B (strain NCTC 13174 / 8081).